A 688-amino-acid chain; its full sequence is Pentatricopeptide repeat-containing protein At3g18020 (688 aa).

PPR repeat units lie at residues 53–88, 89–123, 124–158, 161–195, 196–230, 231–261, 271–305, 306–340, 341–375, 376–406, 411–445, 446–480, 482–517, 518–552, 553–583, 588–622, and 623–657; these read DRAYWRRRIHSICAVRRNPDEALRILDGLCLRGYRP, DSLNLSSVIHSLCDAGRFDEAHRRFLLFLASGFIP, DERTCNVIIARLLYSRSPVSTLGVIHRLIGFKKEF, SLTNYNRLMNQLCTIYRVIDAHKLVFDMRNRGHLP, DVVTFTTLIGGYCEIRELEVAHKVFDEMRVCGIRP, NSLTLSVLIGGFLKMRDVETGRKLMKELWEY, KAAAFANLVDSMCREGYFNDIFEIAENMSLCESVN, VEFAYGHMIDSLCRYRRNHGAARIVYIMKSKGLKP, RRTSYNAIIHGLCKDGGCMRAYQLLEEGSEFEFFP, SEYTYKLLMESLCKELDTGKARNVLELMLRK, RTRIYNIYLRGLCVMDNPTEILNVLVSMLQGDCRP, DEYTLNTVINGLCKMGRVDDAMKVLDDMMTGKFCA, DAVTLNTVMCGLLAQGRAEEALDVLNRVMPENKIKP, GVVAYNAVIRGLFKLHKGDEAMSVFGQLEKASVTA, DSTTYAIIIDGLCVTNKVDMAKKFWDDVIWP, DAFVYAAFLKGLCQSGYLSDACHFLYDLADSGAIP, and NVVCYNTVIAECSRSGLKREAYQILEEMRKNGQAP.

This sequence belongs to the PPR family. P subfamily.

The protein is Pentatricopeptide repeat-containing protein At3g18020 of Arabidopsis thaliana (Mouse-ear cress).